Consider the following 363-residue polypeptide: Translocating chain-associated membrane protein 1-like 1 (363 aa).

The Cytoplasmic portion of the chain corresponds to 1-29; it reads MGLRKKNARNPPVLSHEFMVQNHADMVSC. Residues 30–50 form a helical membrane-spanning segment; the sequence is VGMFFVLGLMFEGTSEMSIAF. The Lumenal segment spans residues 51–80; sequence LTLQHGVVVPAEGLPSGSRTLYHYGVKDLA. Residues 81–101 traverse the membrane as a helical segment; it reads TVFFYMLVAIIIHATIQEYVL. Topologically, residues 102 to 120 are cytoplasmic; it reads DKLSRRLQLTKGKQNKLNE. Residues 116-324 form the TLC domain; it reads NKLNEAGQLS…TVWLQRWLED (209 aa). A helical transmembrane segment spans residues 121–141; sequence AGQLSVFYIVSGIWGMIILAS. The Lumenal segment spans residues 142–159; sequence ENCLSDPTLLWKSQPHNM. The chain crosses the membrane as a helical span at residues 160–179; sequence MTFQMKFFYISQLAYWFHSF. Residues 180–191 lie on the Cytoplasmic side of the membrane; that stretch reads PELYFQKVRKQD. A helical membrane pass occupies residues 192-214; the sequence is IPGQLIYIGLHLFHIGGAYLLYL. The Lumenal portion of the chain corresponds to 215 to 218; sequence NHLG. The chain crosses the membrane as a helical span at residues 219–241; that stretch reads LLLLMLHYAVELLSSVCSLLYFG. Over 242 to 250 the chain is Cytoplasmic; sequence DERYQKGLS. A helical transmembrane segment spans residues 251 to 271; it reads LWPIVFISGRLVTLIVSVVTV. Residues 272–295 lie on the Lumenal side of the membrane; that stretch reads GLHLAGTNRNGNALSGNVNVLAAK. The chain crosses the membrane as a helical span at residues 296–316; it reads IAVLSSSCSIQVYITWTLTTV. At 317 to 363 the chain is on the cytoplasmic side; the sequence is WLQRWLEDANLHVCGRKRRSRARKGTENGVENPNRIDSPPKKKEKAP. Residues 338 to 363 are disordered; sequence ARKGTENGVENPNRIDSPPKKKEKAP. A compositionally biased stretch (basic and acidic residues) spans 354–363; that stretch reads SPPKKKEKAP.

The protein belongs to the TRAM family.

Its subcellular location is the endoplasmic reticulum membrane. Its function is as follows. Stimulatory or required for the translocation of secretory proteins across the ER membrane. The chain is Translocating chain-associated membrane protein 1-like 1 (Tram1l1) from Mus musculus (Mouse).